The chain runs to 59 residues: Small ribosomal subunit protein bS21A (59 aa).

The protein belongs to the bacterial ribosomal protein bS21 family.

The protein is Small ribosomal subunit protein bS21A of Gloeobacter violaceus (strain ATCC 29082 / PCC 7421).